A 545-amino-acid polypeptide reads, in one-letter code: Esterase-5C (545 aa).

The first 19 residues, 1–19 (MLAARLIILLSFYWLSASA), serve as a signal peptide directing secretion. A disulfide bridge connects residues Cys84 and Cys103. The N-linked (GlcNAc...) asparagine glycan is linked to Asn113. Ser207 (acyl-ester intermediate) is an active-site residue. Residues Cys259 and Cys271 are joined by a disulfide bond. An N-linked (GlcNAc...) asparagine glycan is attached at Asn421. His467 functions as the Charge relay system in the catalytic mechanism. Asn507 carries an N-linked (GlcNAc...) asparagine glycan. Residues Cys515 and Cys536 are joined by a disulfide bond.

It belongs to the type-B carboxylesterase/lipase family.

The protein resides in the secreted. The catalysed reaction is a carboxylic ester + H2O = an alcohol + a carboxylate + H(+). This is Esterase-5C (Est-5C) from Drosophila pseudoobscura pseudoobscura (Fruit fly).